Consider the following 669-residue polypeptide: Acetolactate synthase, mitochondrial (669 aa).

A mitochondrion-targeting transit peptide spans 1 to 140 (MTVLAPLRRL…PRHEQAAGHA (140 aa)). E134 is a thiamine diphosphate binding site. FAD-binding positions include R236, 351–372 (HGSG…LGVR), and 403–422 (DISP…IEGD). Residues 497 to 577 (AHQMWAATFY…VKILILNNEE (81 aa)) form a thiamine pyrophosphate binding region. Residues D548 and N575 each contribute to the Mg(2+) site.

The protein belongs to the TPP enzyme family. It depends on Mg(2+) as a cofactor. Thiamine diphosphate is required as a cofactor.

The protein resides in the mitochondrion. It carries out the reaction 2 pyruvate + H(+) = (2S)-2-acetolactate + CO2. It participates in amino-acid biosynthesis; L-isoleucine biosynthesis; L-isoleucine from 2-oxobutanoate: step 1/4. The protein operates within amino-acid biosynthesis; L-valine biosynthesis; L-valine from pyruvate: step 1/4. The polypeptide is Acetolactate synthase, mitochondrial (ilv1) (Schizosaccharomyces pombe (strain 972 / ATCC 24843) (Fission yeast)).